The primary structure comprises 1204 residues: DNA-directed RNA polymerase subunit beta' (1204 aa).

Positions 60, 62, 75, and 78 each coordinate Zn(2+). Aspartate 449, aspartate 451, and aspartate 453 together coordinate Mg(2+). Residues cysteine 819, cysteine 893, cysteine 900, and cysteine 903 each contribute to the Zn(2+) site.

Belongs to the RNA polymerase beta' chain family. As to quaternary structure, the RNAP catalytic core consists of 2 alpha, 1 beta, 1 beta' and 1 omega subunit. When a sigma factor is associated with the core the holoenzyme is formed, which can initiate transcription. It depends on Mg(2+) as a cofactor. The cofactor is Zn(2+).

It carries out the reaction RNA(n) + a ribonucleoside 5'-triphosphate = RNA(n+1) + diphosphate. Its function is as follows. DNA-dependent RNA polymerase catalyzes the transcription of DNA into RNA using the four ribonucleoside triphosphates as substrates. This chain is DNA-directed RNA polymerase subunit beta', found in Bacillus cytotoxicus (strain DSM 22905 / CIP 110041 / 391-98 / NVH 391-98).